The primary structure comprises 160 residues: Probable transcriptional regulator YgiV (160 aa).

In terms of biological role, represses expression of mcbR. The polypeptide is Probable transcriptional regulator YgiV (ygiV) (Escherichia coli (strain K12)).